Reading from the N-terminus, the 95-residue chain is MGNSKSKSNPSSSSESQKGAPTVTEFRRTAIHSLYGRYNCKCCWFADKNLIKCSDHYLCLRCLNVMLKNSDLCNICWEQLPTCITVPEEPSAPPE.

The span at 1–16 (MGNSKSKSNPSSSSES) shows a compositional bias: low complexity. The tract at residues 1–23 (MGNSKSKSNPSSSSESQKGAPTV) is disordered. The N-myristoyl glycine; by host moiety is linked to residue glycine 2. The RING-type; atypical zinc-finger motif lies at 40-76 (CKCCWFADKNLIKCSDHYLCLRCLNVMLKNSDLCNIC). Residues 90-93 (PSAP) carry the PTAP/PSAP motif motif.

Belongs to the arenaviridae Z protein family. Interacts with protein NP; this interaction probably directs the encapsidated genome to budding sites. Interacts (via RING domain) with polymerase L; this interaction inhibits viral transcription and replication, Z partially blocks the product exit tunnel for the releasing nascent RNA product. Interacts with the glycoprotein complex; this interaction plays a role in virion budding. Interacts with host eIF4E; this interaction results in eIF4E reduced affinity for its substrate, the 5'-m7 G cap structure. Interacts (via late-budding domain) with host TSG101; this interaction is essential for budding and release of viral particles. Interacts with host RPLP0; this interaction may serve to load ribosome-like particles inside the virion. Interacts with host PML; this interaction induces PML bodies redistribution in the cytoplasm upon viral infection. Myristoylation is required for the role of RING finger protein Z in assembly and budding.

The protein localises to the virion. It localises to the host cytoplasm. The protein resides in the host perinuclear region. It is found in the host cell membrane. In terms of biological role, plays a crucial role in virion assembly and budding. Expressed late in the virus life cycle, it acts as an inhibitor of viral transcription and RNA synthesis by interacting with the viral polymerase L. Presumably recruits the NP encapsidated genome to cellular membranes at budding sites via direct interaction with NP. Plays critical roles in the final steps of viral release by interacting with host TSG101, a member of the vacuolar protein-sorting pathway and using other cellular host proteins involved in vesicle formation pathway. The budding of the virus progeny occurs after association of protein Z with the viral glycoprotein complex SSP-GP1-GP2 at the cell periphery, step that requires myristoylation of protein Z. Also selectively represses protein production by associating with host eIF4E. In cell-based minigenome assay, has an inhibitory effect on the ribonucleoprotein machinery (vRNP), which is responsible for the replication and transcription of the viral genome. The protein is RING finger protein Z of Guanarito mammarenavirus (isolate Human/Venezuela/NH-95551/1990) (GTOV).